The following is a 282-amino-acid chain: Bis(5'-nucleosyl)-tetraphosphatase, symmetrical (282 aa).

Belongs to the Ap4A hydrolase family.

It carries out the reaction P(1),P(4)-bis(5'-adenosyl) tetraphosphate + H2O = 2 ADP + 2 H(+). Its function is as follows. Hydrolyzes diadenosine 5',5'''-P1,P4-tetraphosphate to yield ADP. The chain is Bis(5'-nucleosyl)-tetraphosphatase, symmetrical from Salmonella paratyphi A (strain ATCC 9150 / SARB42).